An 890-amino-acid polypeptide reads, in one-letter code: Translation initiation factor IF-2 (890 aa).

The disordered stretch occupies residues 45–304; sequence LIDHLNQKNS…LQQGFQKPAQ (260 aa). Over residues 67 to 81 the composition is skewed to polar residues; it reads STLNIPGTGGKSKSV. The segment covering 92–217 has biased composition (basic and acidic residues); sequence VKRDPQEAER…RMAEENKWTD (126 aa). Basic residues predominate over residues 252–266; that stretch reads GRGRNAKAARPKKGN. Residues 267–280 show a composition bias toward basic and acidic residues; it reads KHSESKADREEARA. The tr-type G domain maps to 389-558; the sequence is PRAPVVTIMG…LLQAEVLELK (170 aa). Positions 398-405 are G1; the sequence is GHVDHGKT. 398–405 contacts GTP; sequence GHVDHGKT. Positions 423–427 are G2; it reads GITQH. Residues 444–447 form a G3 region; that stretch reads DTPG. Residues 444–448 and 498–501 contribute to the GTP site; these read DTPGH and NKID. Residues 498–501 form a G4 region; that stretch reads NKID. The interval 534 to 536 is G5; it reads SAK. Lys-808 is subject to N6-acetyllysine.

The protein belongs to the TRAFAC class translation factor GTPase superfamily. Classic translation factor GTPase family. IF-2 subfamily.

It is found in the cytoplasm. One of the essential components for the initiation of protein synthesis. Protects formylmethionyl-tRNA from spontaneous hydrolysis and promotes its binding to the 30S ribosomal subunits. Also involved in the hydrolysis of GTP during the formation of the 70S ribosomal complex. The polypeptide is Translation initiation factor IF-2 (Escherichia fergusonii (strain ATCC 35469 / DSM 13698 / CCUG 18766 / IAM 14443 / JCM 21226 / LMG 7866 / NBRC 102419 / NCTC 12128 / CDC 0568-73)).